Reading from the N-terminus, the 265-residue chain is MKSLFYFFERINFLTADFLLKKIRIGADNLKDVSSLDLFFVHMHHRGVAVHNIFLFLLTYVPFFKRAVLGCYLKKKLFIDHDLKNKNYFKMKRANALFFKGDFLTSNNFLRASTTFYNSFFFFLIRNHVITKTTLNAIYFSKGSFKPAETSYYFNAYVLHFFKKNKVNDFIVFLNENKIKDYWAYLTTIYASPEAQNLKLIDPVGSLIEQSNSYADRLPTRRTLRKPAPTQSSMSRLCILLFSLTTPPLKKLRPPLSLRLHSCYP.

It localises to the mitochondrion. This is an uncharacterized protein from Paramecium tetraurelia.